The following is a 907-amino-acid chain: Protein translocase subunit SecA (907 aa).

Residues Q87, 105–109 (GEGKT), and D512 contribute to the ATP site. The tract at residues 869–897 (AESLSAHTPVVREGEKVGRNDPCPCGSGR) is disordered. Residues 878 to 887 (VVREGEKVGR) are compositionally biased toward basic and acidic residues. Zn(2+)-binding residues include C891, C893, C902, and H903.

Belongs to the SecA family. As to quaternary structure, monomer and homodimer. Part of the essential Sec protein translocation apparatus which comprises SecA, SecYEG and auxiliary proteins SecDF-YajC and YidC. Requires Zn(2+) as cofactor.

The protein resides in the cell inner membrane. Its subcellular location is the cytoplasm. It carries out the reaction ATP + H2O + cellular proteinSide 1 = ADP + phosphate + cellular proteinSide 2.. In terms of biological role, part of the Sec protein translocase complex. Interacts with the SecYEG preprotein conducting channel. Has a central role in coupling the hydrolysis of ATP to the transfer of proteins into and across the cell membrane, serving both as a receptor for the preprotein-SecB complex and as an ATP-driven molecular motor driving the stepwise translocation of polypeptide chains across the membrane. This chain is Protein translocase subunit SecA, found in Shewanella sediminis (strain HAW-EB3).